The primary structure comprises 294 residues: Probable enoyl-CoA hydratase 2 (294 aa).

(3R)-3-hydroxydecanoyl-CoA-binding positions include His84–Gly85, Lys113, Asp190–His195, Gly213, and Phe243. A MaoC-like domain is found at Asp165 to Ser269. Positions Gly292 to Leu294 match the Microbody targeting signal motif.

This sequence belongs to the short-chain dehydrogenases/reductases (SDR) family.

The protein resides in the peroxisome. The enzyme catalyses a (3R)-3-hydroxyacyl-CoA = a (2E)-enoyl-CoA + H2O. The polypeptide is Probable enoyl-CoA hydratase 2 (mfeB) (Dictyostelium discoideum (Social amoeba)).